Reading from the N-terminus, the 311-residue chain is Pyrimidine-specific ribonucleoside hydrolase RihA (311 aa).

H240 is a catalytic residue.

The protein belongs to the IUNH family. RihA subfamily.

In terms of biological role, hydrolyzes with equal efficiency cytidine or uridine to ribose and cytosine or uracil, respectively. This chain is Pyrimidine-specific ribonucleoside hydrolase RihA, found in Escherichia coli (strain SMS-3-5 / SECEC).